Reading from the N-terminus, the 303-residue chain is Methionyl-tRNA formyltransferase (303 aa).

Residue 108 to 111 (SDLP) coordinates (6S)-5,6,7,8-tetrahydrofolate.

The protein belongs to the Fmt family.

The catalysed reaction is L-methionyl-tRNA(fMet) + (6R)-10-formyltetrahydrofolate = N-formyl-L-methionyl-tRNA(fMet) + (6S)-5,6,7,8-tetrahydrofolate + H(+). Its function is as follows. Attaches a formyl group to the free amino group of methionyl-tRNA(fMet). The formyl group appears to play a dual role in the initiator identity of N-formylmethionyl-tRNA by promoting its recognition by IF2 and preventing the misappropriation of this tRNA by the elongation apparatus. This Rickettsia felis (strain ATCC VR-1525 / URRWXCal2) (Rickettsia azadi) protein is Methionyl-tRNA formyltransferase.